Consider the following 287-residue polypeptide: Undecaprenyl-diphosphatase (287 aa).

Transmembrane regions (helical) follow at residues 6 to 26 (LHLL…FIPV), 45 to 65 (SGKV…MWIF), 89 to 109 (NLLL…KSIK), 111 to 131 (VFYH…IMLW), 204 to 224 (ATEF…VYDL), 238 to 258 (AIAV…RAVL), and 266 to 286 (YRVF…WIYA).

This sequence belongs to the UppP family.

It localises to the cell inner membrane. It catalyses the reaction di-trans,octa-cis-undecaprenyl diphosphate + H2O = di-trans,octa-cis-undecaprenyl phosphate + phosphate + H(+). Functionally, catalyzes the dephosphorylation of undecaprenyl diphosphate (UPP). Confers resistance to bacitracin. This Bordetella bronchiseptica (strain ATCC BAA-588 / NCTC 13252 / RB50) (Alcaligenes bronchisepticus) protein is Undecaprenyl-diphosphatase.